Here is a 107-residue protein sequence, read N- to C-terminus: Phosphoribosyl-ATP pyrophosphatase (107 aa).

It belongs to the PRA-PH family.

It localises to the cytoplasm. The enzyme catalyses 1-(5-phospho-beta-D-ribosyl)-ATP + H2O = 1-(5-phospho-beta-D-ribosyl)-5'-AMP + diphosphate + H(+). The protein operates within amino-acid biosynthesis; L-histidine biosynthesis; L-histidine from 5-phospho-alpha-D-ribose 1-diphosphate: step 2/9. The chain is Phosphoribosyl-ATP pyrophosphatase from Methylobacterium nodulans (strain LMG 21967 / CNCM I-2342 / ORS 2060).